The following is a 391-amino-acid chain: Phosphoglycerate kinase (391 aa).

Residues 21–23 (DLN), Arg36, 59–62 (HLGR), Arg114, and Arg147 contribute to the substrate site. Residues Lys198, Glu315, and 344-347 (GGDT) contribute to the ATP site.

Belongs to the phosphoglycerate kinase family. Monomer.

It is found in the cytoplasm. It catalyses the reaction (2R)-3-phosphoglycerate + ATP = (2R)-3-phospho-glyceroyl phosphate + ADP. Its pathway is carbohydrate degradation; glycolysis; pyruvate from D-glyceraldehyde 3-phosphate: step 2/5. This is Phosphoglycerate kinase from Actinobacillus succinogenes (strain ATCC 55618 / DSM 22257 / CCUG 43843 / 130Z).